Consider the following 48-residue polypeptide: MLENNVFRLMILMGGVIALIAIITICSDGIPEVEDVFQHFISHKNTKY.

An N-terminal signal peptide occupies residues 1 to 21; that stretch reads MLENNVFRLMILMGGVIALIA.

This is an uncharacterized protein from Bacillus anthracis.